A 372-amino-acid chain; its full sequence is Heat-inducible transcription repressor HrcA (372 aa).

The disordered stretch occupies residues 296–331 (VSSGYGRSGEAGEPAGNDPVGEPETESETESQTNDM).

This sequence belongs to the HrcA family.

In terms of biological role, negative regulator of class I heat shock genes (grpE-dnaK-dnaJ and groELS operons). Prevents heat-shock induction of these operons. This Bifidobacterium longum subsp. infantis (strain ATCC 15697 / DSM 20088 / JCM 1222 / NCTC 11817 / S12) protein is Heat-inducible transcription repressor HrcA.